A 119-amino-acid polypeptide reads, in one-letter code: Protein TusC (119 aa).

It belongs to the DsrF/TusC family. Heterohexamer, formed by a dimer of trimers. The hexameric TusBCD complex contains 2 copies each of TusB, TusC and TusD. The TusBCD complex interacts with TusE.

Its subcellular location is the cytoplasm. Functionally, part of a sulfur-relay system required for 2-thiolation of 5-methylaminomethyl-2-thiouridine (mnm(5)s(2)U) at tRNA wobble positions. The protein is Protein TusC of Photorhabdus laumondii subsp. laumondii (strain DSM 15139 / CIP 105565 / TT01) (Photorhabdus luminescens subsp. laumondii).